Consider the following 32-residue polypeptide: Photosystem II reaction center protein Z (32 aa).

A helical membrane pass occupies residues 12–32; sequence IGSAAWAGLVLLVGTLNYLVI.

This sequence belongs to the PsbZ family. As to quaternary structure, PSII is composed of 1 copy each of membrane proteins PsbA, PsbB, PsbC, PsbD, PsbE, PsbF, PsbH, PsbI, PsbJ, PsbK, PsbL, PsbM, PsbT, PsbY, PsbZ, Psb30/Ycf12, at least 3 peripheral proteins of the oxygen-evolving complex and a large number of cofactors. It forms dimeric complexes.

The protein localises to the plastid. Its subcellular location is the chloroplast thylakoid membrane. Functionally, may control the interaction of photosystem II (PSII) cores with the light-harvesting antenna, regulates electron flow through the 2 photosystem reaction centers. PSII is a light-driven water plastoquinone oxidoreductase, using light energy to abstract electrons from H(2)O, generating a proton gradient subsequently used for ATP formation. The sequence is that of Photosystem II reaction center protein Z from Euglena anabaena (Euglenaria anabaena).